The sequence spans 314 residues: Thymidylate synthase (314 aa).

Residues Arg-21 and 176–177 (RR) each bind dUMP. The Nucleophile role is filled by Cys-196. Residues 216–219 (RSAD), Asn-227, and 257–259 (HLY) contribute to the dUMP site. Residue Asp-219 coordinates (6R)-5,10-methylene-5,6,7,8-tetrahydrofolate. Ser-313 is a (6R)-5,10-methylene-5,6,7,8-tetrahydrofolate binding site.

It belongs to the thymidylate synthase family. Bacterial-type ThyA subfamily. Homodimer.

It is found in the cytoplasm. The catalysed reaction is dUMP + (6R)-5,10-methylene-5,6,7,8-tetrahydrofolate = 7,8-dihydrofolate + dTMP. It functions in the pathway pyrimidine metabolism; dTTP biosynthesis. Its function is as follows. Catalyzes the reductive methylation of 2'-deoxyuridine-5'-monophosphate (dUMP) to 2'-deoxythymidine-5'-monophosphate (dTMP) while utilizing 5,10-methylenetetrahydrofolate (mTHF) as the methyl donor and reductant in the reaction, yielding dihydrofolate (DHF) as a by-product. This enzymatic reaction provides an intracellular de novo source of dTMP, an essential precursor for DNA biosynthesis. The chain is Thymidylate synthase from Listeria monocytogenes serotype 4b (strain F2365).